A 510-amino-acid polypeptide reads, in one-letter code: Abscisic acid 8'-hydroxylase 2 (510 aa).

The helical transmembrane segment at 3–23 threads the bilayer; it reads FLLFFVFVTAAVLCFVVPAFL. Residue Cys-441 participates in heme binding.

This sequence belongs to the cytochrome P450 family. Heme serves as cofactor.

The protein resides in the membrane. It catalyses the reaction 2-cis-(+)-abscisate + reduced [NADPH--hemoprotein reductase] + O2 = (+)-8'-hydroxyabscisate + oxidized [NADPH--hemoprotein reductase] + H2O + H(+). Its pathway is plant hormone degradation; abscisic acid degradation. In terms of biological role, involved in the oxidative degradation of abscisic acid. This is Abscisic acid 8'-hydroxylase 2 (CYP707A6) from Oryza sativa subsp. japonica (Rice).